A 436-amino-acid chain; its full sequence is Probable transporter MCH1 (436 aa).

Helical transmembrane passes span 27–47 (VVAF…LLFT), 66–86 (MISS…GYLA), 93–113 (LLSL…SYLV), 119–139 (SVIG…SLYF), 155–175 (LAIS…AQIL), 188–208 (LEVV…ASFV), and 249–269 (FVSF…ILNI). Residue asparagine 278 is glycosylated (N-linked (GlcNAc...) asparagine). 5 consecutive transmembrane segments (helical) span residues 295 to 312 (VSIM…LGVL), 325 to 345 (LLVV…SAIL), 347 to 367 (GVSY…IWGI), 373 to 393 (TWGS…MFYG), and 410 to 430 (TAGA…IWYA).

It belongs to the major facilitator superfamily.

It localises to the vacuole membrane. Functionally, probable transporter. In Candida albicans (strain SC5314 / ATCC MYA-2876) (Yeast), this protein is Probable transporter MCH1 (MCH1).